The sequence spans 428 residues: Glutamate-1-semialdehyde 2,1-aminomutase (428 aa).

Lys265 carries the post-translational modification N6-(pyridoxal phosphate)lysine.

Belongs to the class-III pyridoxal-phosphate-dependent aminotransferase family. HemL subfamily. Homodimer. Pyridoxal 5'-phosphate is required as a cofactor.

The protein resides in the cytoplasm. The catalysed reaction is (S)-4-amino-5-oxopentanoate = 5-aminolevulinate. Its pathway is porphyrin-containing compound metabolism; protoporphyrin-IX biosynthesis; 5-aminolevulinate from L-glutamyl-tRNA(Glu): step 2/2. This chain is Glutamate-1-semialdehyde 2,1-aminomutase, found in Thioalkalivibrio sulfidiphilus (strain HL-EbGR7).